The primary structure comprises 459 residues: Argininosuccinate lyase (459 aa).

This sequence belongs to the lyase 1 family. Argininosuccinate lyase subfamily.

The protein resides in the cytoplasm. It catalyses the reaction 2-(N(omega)-L-arginino)succinate = fumarate + L-arginine. It functions in the pathway amino-acid biosynthesis; L-arginine biosynthesis; L-arginine from L-ornithine and carbamoyl phosphate: step 3/3. The polypeptide is Argininosuccinate lyase (Oceanobacillus iheyensis (strain DSM 14371 / CIP 107618 / JCM 11309 / KCTC 3954 / HTE831)).